The chain runs to 58 residues: Large ribosomal subunit protein eL24 (58 aa).

Zn(2+)-binding residues include Cys-6, Cys-9, Cys-32, and Cys-36. A C4-type zinc finger spans residues Cys-6–Cys-36.

Belongs to the eukaryotic ribosomal protein eL24 family. As to quaternary structure, part of the 50S ribosomal subunit. Forms a cluster with proteins L3 and L14. Zn(2+) serves as cofactor.

Binds to the 23S rRNA. The protein is Large ribosomal subunit protein eL24 of Pyrobaculum neutrophilum (strain DSM 2338 / JCM 9278 / NBRC 100436 / V24Sta) (Thermoproteus neutrophilus).